Here is a 119-residue protein sequence, read N- to C-terminus: Large ribosomal subunit protein uL22c (119 aa).

The protein belongs to the universal ribosomal protein uL22 family. In terms of assembly, part of the 50S ribosomal subunit.

Its subcellular location is the plastid. The protein resides in the chloroplast. This protein binds specifically to 23S rRNA. In terms of biological role, the globular domain of the protein is located near the polypeptide exit tunnel on the outside of the subunit, while an extended beta-hairpin is found that lines the wall of the exit tunnel in the center of the 70S ribosome. This Marchantia polymorpha (Common liverwort) protein is Large ribosomal subunit protein uL22c (rpl22).